A 204-amino-acid polypeptide reads, in one-letter code: Guanylate kinase (204 aa).

A Guanylate kinase-like domain is found at 1–182 (MLYIISAPSG…ALSDLNTIIC (182 aa)). 7-14 (APSGTGKS) serves as a coordination point for ATP.

This sequence belongs to the guanylate kinase family.

The protein resides in the cytoplasm. It carries out the reaction GMP + ATP = GDP + ADP. Functionally, essential for recycling GMP and indirectly, cGMP. This is Guanylate kinase from Baumannia cicadellinicola subsp. Homalodisca coagulata.